The primary structure comprises 107 residues: Putative pterin-4-alpha-carbinolamine dehydratase (107 aa).

The protein belongs to the pterin-4-alpha-carbinolamine dehydratase family.

The enzyme catalyses (4aS,6R)-4a-hydroxy-L-erythro-5,6,7,8-tetrahydrobiopterin = (6R)-L-erythro-6,7-dihydrobiopterin + H2O. This is Putative pterin-4-alpha-carbinolamine dehydratase from Rubrobacter xylanophilus (strain DSM 9941 / JCM 11954 / NBRC 16129 / PRD-1).